Reading from the N-terminus, the 105-residue chain is Pyrimidine/purine nucleoside phosphorylase (105 aa).

This sequence belongs to the nucleoside phosphorylase PpnP family.

It catalyses the reaction a purine D-ribonucleoside + phosphate = a purine nucleobase + alpha-D-ribose 1-phosphate. It carries out the reaction adenosine + phosphate = alpha-D-ribose 1-phosphate + adenine. The catalysed reaction is cytidine + phosphate = cytosine + alpha-D-ribose 1-phosphate. The enzyme catalyses guanosine + phosphate = alpha-D-ribose 1-phosphate + guanine. It catalyses the reaction inosine + phosphate = alpha-D-ribose 1-phosphate + hypoxanthine. It carries out the reaction thymidine + phosphate = 2-deoxy-alpha-D-ribose 1-phosphate + thymine. The catalysed reaction is uridine + phosphate = alpha-D-ribose 1-phosphate + uracil. The enzyme catalyses xanthosine + phosphate = alpha-D-ribose 1-phosphate + xanthine. Its function is as follows. Catalyzes the phosphorolysis of diverse nucleosides, yielding D-ribose 1-phosphate and the respective free bases. Can use uridine, adenosine, guanosine, cytidine, thymidine, inosine and xanthosine as substrates. Also catalyzes the reverse reactions. This chain is Pyrimidine/purine nucleoside phosphorylase, found in Ralstonia nicotianae (strain ATCC BAA-1114 / GMI1000) (Ralstonia solanacearum).